Reading from the N-terminus, the 181-residue chain is Acetolactate synthase small subunit (181 aa).

One can recognise an ACT domain in the interval 4 to 78 (TLSVLVEDES…NVLKIQDITN (75 aa)).

The protein belongs to the acetolactate synthase small subunit family. Dimer of large and small chains.

It is found in the plastid. The protein localises to the chloroplast. It catalyses the reaction 2 pyruvate + H(+) = (2S)-2-acetolactate + CO2. It participates in amino-acid biosynthesis; L-isoleucine biosynthesis; L-isoleucine from 2-oxobutanoate: step 1/4. The protein operates within amino-acid biosynthesis; L-valine biosynthesis; L-valine from pyruvate: step 1/4. In Galdieria sulphuraria (Red alga), this protein is Acetolactate synthase small subunit (ilvH).